We begin with the raw amino-acid sequence, 349 residues long: N-formyl peptide receptor 3 (349 aa).

Over 1–27 (METNFSIPLNETEEVLPEPAGHTVLWI) the chain is Extracellular. N-linked (GlcNAc...) asparagine glycans are attached at residues Asn4 and Asn10. A helical transmembrane segment spans residues 28–50 (FSLLVHGVTFIFGVLGNGLVIWV). The Cytoplasmic segment spans residues 51 to 61 (AGFLMTRTVNT). Residues 62-83 (ICYLNLALADFSFSAILPFHMV) form a helical membrane-spanning segment. Topologically, residues 84-100 (SVAMREKWPFGSFLCKL) are extracellular. Residues Cys98 and Cys176 are joined by a disulfide bond. A helical membrane pass occupies residues 101–121 (VHVMIDINLFVSVYLITIIAL). Topologically, residues 122–140 (DRCICVLHPAWAQNHRTMS) are cytoplasmic. The helical transmembrane segment at 141 to 162 (LAKRVMTGLWILTIVLTLPNFI) threads the bilayer. The Extracellular segment spans residues 163–205 (FWTTISTTNGDTYCIFNFPFWGDTAVERLNVFITMAKVFLILH). A helical membrane pass occupies residues 206–226 (FIIGFSMPMSIITVCYGIIAA). Residues 227–242 (KIHRNHMIKSSRPLRV) lie on the Cytoplasmic side of the membrane. Residues 243–266 (FAAVVASFFICWFPYELIGILMAV) form a helical membrane-spanning segment. The Extracellular portion of the chain corresponds to 267 to 286 (WLKEMLLNGKYKIILVLINP). A helical transmembrane segment spans residues 287–306 (TSSLAFFNSCLNPILYVFLG). Topologically, residues 307 to 349 (SNFQERLIRSLPTSLERALTEVPDSAQTSNTHTTSASPPEETE) are cytoplasmic. The segment at 327 to 349 (EVPDSAQTSNTHTTSASPPEETE) is disordered. The span at 331-343 (SAQTSNTHTTSAS) shows a compositional bias: polar residues.

Belongs to the G-protein coupled receptor 1 family.

It localises to the cell membrane. In terms of biological role, low affinity receptor for N-formyl-methionyl peptides, which are powerful neutrophils chemotactic factors. Binding of FMLP to the receptor causes activation of neutrophils. This response is mediated via a G-protein that activates a phosphatidylinositol-calcium second messenger system. The protein is N-formyl peptide receptor 3 (FPR3) of Gorilla gorilla gorilla (Western lowland gorilla).